The sequence spans 471 residues: Indole-3-acetate beta-glucosyltransferase (471 aa).

His-15 (proton acceptor) is an active-site residue. Residue His-15 participates in an anthocyanidin binding. Asp-107 (charge relay) is an active-site residue. The UDP-alpha-D-glucose site is built by Thr-129, Gln-344, His-359, Trp-362, Asn-363, Ser-364, Glu-367, Asp-383, and Gln-384.

The protein belongs to the UDP-glycosyltransferase family.

The enzyme catalyses (indol-3-yl)acetate + UDP-alpha-D-glucose = 1-O-(indol-3-ylacetyl)-beta-D-glucose + UDP. It functions in the pathway plant hormone metabolism; auxin conjugation. The chain is Indole-3-acetate beta-glucosyltransferase (IAGLU) from Zea mays (Maize).